We begin with the raw amino-acid sequence, 491 residues long: CTD small phosphatase-like protein 1 (491 aa).

4 disordered regions span residues 1-53, 140-198, 221-249, and 261-282; these read MTYA…SLDY, KLTK…TARR, KIQS…TGPP, and TVTG…DGVT. Residues 17–26 show a composition bias toward pro residues; it reads VPPPRTPVGP. The segment covering 37–49 has biased composition (polar residues); it reads SASQPLQPKNGAN. The segment covering 141–156 has biased composition (basic and acidic residues); sequence LTKDEKNGGKMNRDGG. The span at 176-187 shows a compositional bias: polar residues; sequence ASTPLNSFSANA. Over residues 223–237 the composition is skewed to low complexity; the sequence is QSSQRTNSTNNNHQN. Polar residues-rich tracts occupy residues 238-249 and 264-276; these read GRPSTPTNTGPP and GLPT…QQNG. Positions 307 to 465 constitute an FCP1 homology domain; it reads QDSNKKCLVI…LDILPSLEHL (159 aa). The 4-aspartylphosphate intermediate role is filled by D317. Mg(2+) is bound by residues D317, D319, and N428. The active-site Proton donor is D319.

May interact (via phosphatase domain) with cpna-1. Isoform a and isoform b may interact with lim-9 (via LIM zinc-binding domain). Isoform a and isoform b may interact (via FCP1 homology domain) with unc-89 (via fibronectin type-III domain 1, Ig-like C2-type domain 48/49 and protein kinase domain 1 or Ig-like C2-type domain 50, fibronectin type-III domain 2 and protein kinase domain 2); the interaction may act as a molecular bridge to bring two unc-89 molecules together or to stabilize a loop between the 2 protein kinase domains. The cofactor is Mg(2+). As to expression, expressed in pharyngeal, vulval and body wall muscles.

It localises to the cytoplasm. Its subcellular location is the myofibril. The protein resides in the sarcomere. It is found in the m line. It carries out the reaction O-phospho-L-seryl-[protein] + H2O = L-seryl-[protein] + phosphate. It catalyses the reaction O-phospho-L-threonyl-[protein] + H2O = L-threonyl-[protein] + phosphate. Its activity is regulated as follows. Inhibited by beryllium trifluoride (BeF(3-)) and tetrafluoroaluminate (AlF(4-)) but not by sodium fluoride (NaF) or sodium orthovanadate (Na3VO4). Functionally, phosphatase which may play a role in the egg laying muscles. In Caenorhabditis elegans, this protein is CTD small phosphatase-like protein 1.